The following is a 264-amino-acid chain: uncharacterized protein (264 aa).

Residues 1-26 (MMKKLFHSTLIVLLFFSFFGVQPIHA) form the signal peptide.

This is an uncharacterized protein from Bacillus subtilis (strain 168).